The chain runs to 67 residues: Tachystatin-A2 (67 aa).

A signal peptide spans 1-23 (MKLQNTLILIGCLFLMGAMIGDA). 3 disulfides stabilise this stretch: cysteine 27/cysteine 47, cysteine 34/cysteine 52, and cysteine 46/cysteine 64.

Granular hemocytes, small secretory granules.

The protein resides in the secreted. Its function is as follows. Exhibits stronger antimicrobial activity against the Gram-positive bacteria (S.aureus (IC(50)=4.2 ug/ml)) and fungi (C.albicans (IC(50)=3.0 ug/ml) and P.pastoris (IC(50)=0.5 ug/ml)) than Gram-negative bacteria (E.coli (IC(50)=25 ug/ml)). Binds to chitin (8.4 uM are required to obtain 50% of binding). Does not cause hemolysis on sheep erythrocytes. Has no blocking activity on the P-type calcium channel. Has also been shown to weakly inhibit Kv1.2/KCNA2 voltage-gated potassium channels and TRPV1 receptors. This Tachypleus tridentatus (Japanese horseshoe crab) protein is Tachystatin-A2.